Reading from the N-terminus, the 624-residue chain is Chaperone protein HtpG (624 aa).

Positions 1–336 (MKGQETRGFQ…SNDLPLNVSR (336 aa)) are a; substrate-binding. Positions 337–552 (EILQDSTVTR…ADEMSTQMAK (216 aa)) are b. The segment at 553 to 624 (LFAAAGQSVP…IRRMNQLLVS (72 aa)) is c.

The protein belongs to the heat shock protein 90 family. Homodimer.

Its subcellular location is the cytoplasm. Functionally, molecular chaperone. Has ATPase activity. The polypeptide is Chaperone protein HtpG (Salmonella typhi).